Reading from the N-terminus, the 251-residue chain is Octanoyltransferase (251 aa).

One can recognise a BPL/LPL catalytic domain in the interval 49–230; sequence DEIPDQLLIL…ALDDALAGRL (182 aa). Substrate-binding positions include 87-94, 160-162, and 173-175; these read RGGRITWH, AIG, and GVA. Residue Cys191 is the Acyl-thioester intermediate of the active site.

This sequence belongs to the LipB family.

The protein localises to the cytoplasm. The enzyme catalyses octanoyl-[ACP] + L-lysyl-[protein] = N(6)-octanoyl-L-lysyl-[protein] + holo-[ACP] + H(+). It functions in the pathway protein modification; protein lipoylation via endogenous pathway; protein N(6)-(lipoyl)lysine from octanoyl-[acyl-carrier-protein]: step 1/2. Functionally, catalyzes the transfer of endogenously produced octanoic acid from octanoyl-acyl-carrier-protein onto the lipoyl domains of lipoate-dependent enzymes. Lipoyl-ACP can also act as a substrate although octanoyl-ACP is likely to be the physiological substrate. The protein is Octanoyltransferase of Corynebacterium glutamicum (strain R).